A 688-amino-acid polypeptide reads, in one-letter code: Glycine--tRNA ligase beta subunit (688 aa).

The protein belongs to the class-II aminoacyl-tRNA synthetase family. In terms of assembly, tetramer of two alpha and two beta subunits.

Its subcellular location is the cytoplasm. The enzyme catalyses tRNA(Gly) + glycine + ATP = glycyl-tRNA(Gly) + AMP + diphosphate. In Shewanella sp. (strain MR-4), this protein is Glycine--tRNA ligase beta subunit.